A 157-amino-acid chain; its full sequence is Large ribosomal subunit protein uL15 (157 aa).

Basic and acidic residues predominate over residues 1-13 (MKLNDLRDKDGAT). Residues 1 to 39 (MKLNDLRDKDGATHSKKRLGRGIGSGSGKTAGRGVKGQK) are disordered. Residues 21-35 (RGIGSGSGKTAGRGV) show a composition bias toward gly residues.

Belongs to the universal ribosomal protein uL15 family. Part of the 50S ribosomal subunit.

Functionally, binds to the 23S rRNA. The protein is Large ribosomal subunit protein uL15 of Mesorhizobium japonicum (strain LMG 29417 / CECT 9101 / MAFF 303099) (Mesorhizobium loti (strain MAFF 303099)).